The primary structure comprises 348 residues: 2-methyl-6-phytyl-1,4-hydroquinone methyltransferase 2, chloroplastic (348 aa).

Residues 1–48 (MAMASSAYAPAGGVGTHSAPGRIRPPRGLGFSTTTTKSRPLVLTRRGG) form a disordered region. Residues 1 to 59 (MAMASSAYAPAGGVGTHSAPGRIRPPRGLGFSTTTTKSRPLVLTRRGGGGGNISVARLR) constitute a chloroplast transit peptide. At 60 to 317 (CAASSSSAAA…PVNPITFLFR (258 aa)) the chain is on the chloroplast intermembrane side. Positions 125–134 (VVDVGGGTGF) are SAM motif I. The segment at 170-183 (VTIMEGDAEDLPFP) is SAM motif II. Positions 211–224 (RVLRLGGVACMIGP) are SAM motif III. The chain crosses the membrane as a helical span at residues 318–338 (FLMGTICAAYYVLVPIYMWIK). Over 339 to 348 (DQIVPKGMPI) the chain is Stromal.

This sequence belongs to the class I-like SAM-binding methyltransferase superfamily. MPBQ/MBSQ MT family.

Its subcellular location is the plastid. It is found in the chloroplast inner membrane. The catalysed reaction is 2-methyl-6-phytyl-1,4-benzene-1,4-diol + S-adenosyl-L-methionine = 2,3-dimethyl-6-phytylbenzene-1,4-diol + S-adenosyl-L-homocysteine + H(+). It carries out the reaction 2-methyl-6-(all-trans-nonaprenyl)benzene-1,4-diol + S-adenosyl-L-methionine = plastoquinol-9 + S-adenosyl-L-homocysteine + H(+). It catalyses the reaction 6-geranylgeranyl-2-methylbenzene-1,4-diol + S-adenosyl-L-methionine = 6-geranylgeranyl-2,3-dimethylbenzene-1,4-diol + S-adenosyl-L-homocysteine + H(+). The protein operates within cofactor biosynthesis; tocopherol biosynthesis. Functionally, involved in a key methylation step in both tocopherols (vitamin E) and plastoquinone synthesis. Catalyzes the conversion of 2-methyl-6-phytyl-1,4-hydroquinone (MPBQ) to 2,3-dimethyl-6-phytyl-1,4-hydroquinone (DMPQ, a substrate for tocopherol cyclase), and 2-methyl-6-solanyl-1,4-benzoquinone (MSBQ) to plastoquinone. This chain is 2-methyl-6-phytyl-1,4-hydroquinone methyltransferase 2, chloroplastic, found in Oryza sativa subsp. japonica (Rice).